We begin with the raw amino-acid sequence, 121 residues long: Large ribosomal subunit protein uL14 (121 aa).

This sequence belongs to the universal ribosomal protein uL14 family. As to quaternary structure, part of the 50S ribosomal subunit. Forms a cluster with proteins L3 and L19. In the 70S ribosome, L14 and L19 interact and together make contacts with the 16S rRNA in bridges B5 and B8.

Its function is as follows. Binds to 23S rRNA. Forms part of two intersubunit bridges in the 70S ribosome. This chain is Large ribosomal subunit protein uL14, found in Synechococcus sp. (strain RCC307).